We begin with the raw amino-acid sequence, 324 residues long: NAD(P)H-dependent D-xylose reductase I,II (324 aa).

Tyr-54 functions as the Proton donor in the catalytic mechanism. His-116 is a binding site for substrate. Residues 171–172 (SN), 220–229 (SSFGPQSFLE), and 276–286 (KSNNPERLAQN) each bind NAD(+).

This sequence belongs to the aldo/keto reductase family.

The catalysed reaction is xylitol + NAD(+) = D-xylose + NADH + H(+). It catalyses the reaction xylitol + NADP(+) = D-xylose + NADPH + H(+). It functions in the pathway carbohydrate metabolism; D-xylose degradation. Its function is as follows. Reduces D-xylose into xylitol. Has a preference for NADPH, but can also utilize NADH as cosubstrate. The chain is NAD(P)H-dependent D-xylose reductase I,II (xyrA) from Candida tropicalis (Yeast).